The primary structure comprises 472 residues: Glutamate synthase [NADPH] small chain (472 aa).

The 32-residue stretch at 41-72 folds into the 4Fe-4S ferredoxin-type domain; the sequence is QDAAAQAHRCLHCGNPYCEWKCPVHNYIPNWL. Residues Cys50, Cys53, Cys58, and Cys62 each contribute to the [4Fe-4S] cluster site.

Requires [4Fe-4S] cluster as cofactor.

The enzyme catalyses 2 L-glutamate + NADP(+) = L-glutamine + 2-oxoglutarate + NADPH + H(+). The protein operates within amino-acid biosynthesis; L-glutamate biosynthesis via GLT pathway; L-glutamate from 2-oxoglutarate and L-glutamine (NADP(+) route): step 1/1. It functions in the pathway energy metabolism; nitrogen metabolism. In terms of biological role, catalyzes the conversion of L-glutamine and 2-oxoglutarate into two molecules of L-glutamate. In Halomonas elongata (strain ATCC 33173 / DSM 2581 / NBRC 15536 / NCIMB 2198 / 1H9), this protein is Glutamate synthase [NADPH] small chain.